The primary structure comprises 195 residues: MSYLVPIVIEQTSRGERSYDIWSRLLKDRTIFIGGPIDDHVANLVIAQMLFLEAEDPEKDIHLYINSPGGVITAGMAIYDTMQYIKPDVSTICIGQAASMGAFLLAAGAKGKRFSLPYARIMIHQPLGGVQGQATDIDIHAREILRMRDMLNELLTKHTGQPKEKIERDTERDFFMSAAEAKEYGIIDEVITVRK.

Residue Ser-99 is the Nucleophile of the active site. Residue His-124 is part of the active site.

The protein belongs to the peptidase S14 family. In terms of assembly, fourteen ClpP subunits assemble into 2 heptameric rings which stack back to back to give a disk-like structure with a central cavity, resembling the structure of eukaryotic proteasomes.

Its subcellular location is the cytoplasm. The catalysed reaction is Hydrolysis of proteins to small peptides in the presence of ATP and magnesium. alpha-casein is the usual test substrate. In the absence of ATP, only oligopeptides shorter than five residues are hydrolyzed (such as succinyl-Leu-Tyr-|-NHMec, and Leu-Tyr-Leu-|-Tyr-Trp, in which cleavage of the -Tyr-|-Leu- and -Tyr-|-Trp bonds also occurs).. Cleaves peptides in various proteins in a process that requires ATP hydrolysis. Has a chymotrypsin-like activity. Plays a major role in the degradation of misfolded proteins. The sequence is that of ATP-dependent Clp protease proteolytic subunit from Carboxydothermus hydrogenoformans (strain ATCC BAA-161 / DSM 6008 / Z-2901).